Reading from the N-terminus, the 573-residue chain is MALSKNSNSNSFNKKKVSYISVPSQIINSLSSSSLQSLLVSPKKSSRSTNRFSFSYRNPRIWFFTLFLVSLFGMLKLGFNVDPISLPFSRYPCSTTQQPLSFDGEQNAASHLGLAQEPILSTGSSNSNAIIQLNGGKNETLLTEGDFWKQPDGLGFKPCLGFTSQYRKDSNSILKNRWKYLLVVVSGGMNQQRNQIVDAVVIARILGASLVVPVLQVNVIWGDESEFADIFDLEHFKDVLADDVHIVSSLPSTHVMTRPVEEKRTPLHASPQWIRAHYLKRINRERVLLLRGLDSRLSKDLPSDLQKLRCKVAFQALRFSPRILELGNKLASRMRNQGQYLSLHLRMEKDVWVRTGCLPGLTPEYDEIVNSERERHPELLTGRSNMTYHERKLAGLCPLTALEVTRLLKALEAPKDARIYWAGGEPLGGKEVLEPLTKEFPQFYNKHDLALPGELEPFANKASVMAAIDYIVCEKSDVFIPSHGGNMGHALQGQRAYAGHKKYITPNKRQMLPYFMNSSLPESDFNRIVKDLHRESLGQPELRMSKAGKDVTKHPVPECMCSDRQQQEQQSDA.

Topologically, residues 1 to 60 (MALSKNSNSNSFNKKKVSYISVPSQIINSLSSSSLQSLLVSPKKSSRSTNRFSFSYRNPR) are cytoplasmic. Residues 61 to 81 (IWFFTLFLVSLFGMLKLGFNV) traverse the membrane as a helical; Signal-anchor for type II membrane protein segment. At 82-573 (DPISLPFSRY…RQQQEQQSDA (492 aa)) the chain is on the lumenal side. A glycan (N-linked (GlcNAc...) asparagine) is linked at Asn138. Position 344 to 346 (344 to 346 (HLR)) interacts with substrate. Residues Asn385 and Asn517 are each glycosylated (N-linked (GlcNAc...) asparagine). Over residues 547-556 (AGKDVTKHPV) the composition is skewed to basic and acidic residues. The segment at 547 to 573 (AGKDVTKHPVPECMCSDRQQQEQQSDA) is disordered. Residues 563–573 (DRQQQEQQSDA) show a composition bias toward polar residues.

This sequence belongs to the glycosyltransferase GT106 family. As to quaternary structure, interacts with RACK1A. Highly expressed in shoot apical meristem (SAM) and in young vegetative tissues.

It localises to the golgi apparatus membrane. It participates in glycan metabolism. Its function is as follows. May play a role in the biosynthesis of matrix polysaccharides and contribute to the biomechanics and development of the plant cell wall. This is O-fucosyltransferase 20 from Arabidopsis thaliana (Mouse-ear cress).